Here is a 442-residue protein sequence, read N- to C-terminus: D-serine dehydratase (442 aa).

Lysine 118 carries the post-translational modification N6-(pyridoxal phosphate)lysine.

The protein belongs to the serine/threonine dehydratase family. DsdA subfamily. Monomer. It depends on pyridoxal 5'-phosphate as a cofactor.

The catalysed reaction is D-serine = pyruvate + NH4(+). The protein is D-serine dehydratase of Shigella flexneri.